We begin with the raw amino-acid sequence, 320 residues long: Endochitinase (320 aa).

Residues 1–23 (MKRTLKVSFFILCLLPLFLGSKA) form the signal peptide. The Chitin-binding type-1 domain occupies 24–64 (EQCGSQAGGAVCPNGLCCSKFGFCGSTDPYCGDGCQSQCKS). Disulfide bonds link Cys26-Cys41, Cys35-Cys47, Cys40-Cys54, Cys58-Cys62, Cys101-Cys163, Cys175-Cys182, and Cys281-Cys313. Glu145 (proton donor) is an active-site residue.

It belongs to the glycosyl hydrolase 19 family. Chitinase class I subfamily.

It catalyses the reaction Random endo-hydrolysis of N-acetyl-beta-D-glucosaminide (1-&gt;4)-beta-linkages in chitin and chitodextrins.. Defense against chitin-containing fungal pathogens. In Pisum sativum (Garden pea), this protein is Endochitinase.